A 100-amino-acid chain; its full sequence is Urease subunit gamma (100 aa).

It belongs to the urease gamma subunit family. In terms of assembly, heterotrimer of UreA (gamma), UreB (beta) and UreC (alpha) subunits. Three heterotrimers associate to form the active enzyme.

It is found in the cytoplasm. The catalysed reaction is urea + 2 H2O + H(+) = hydrogencarbonate + 2 NH4(+). It participates in nitrogen metabolism; urea degradation; CO(2) and NH(3) from urea (urease route): step 1/1. This is Urease subunit gamma from Pseudarthrobacter chlorophenolicus (strain ATCC 700700 / DSM 12829 / CIP 107037 / JCM 12360 / KCTC 9906 / NCIMB 13794 / A6) (Arthrobacter chlorophenolicus).